The sequence spans 294 residues: uncharacterized protein (294 aa).

Disordered stretches follow at residues 1–148 and 268–294; these read MFLR…LEKP and DEAATDWESEGLEREGEEQRGDPGKGL. Phosphoserine is present on residues serine 34 and serine 35. Over residues 35 to 44 the composition is skewed to low complexity; the sequence is SSENSGSDWD. The span at 52-62 shows a compositional bias: basic and acidic residues; the sequence is DVGHPKTKDSG. 2 positions are modified to phosphoserine: serine 71 and serine 90. Basic and acidic residues-rich tracts occupy residues 73–92 and 278–294; these read PSKEEPQVEQLGSKRMDSLK and GLEREGEEQRGDPGKGL.

This is an uncharacterized protein from Homo sapiens (Human).